Here is a 162-residue protein sequence, read N- to C-terminus: ATP synthase subunit b 1 (162 aa).

The chain crosses the membrane as a helical span at residues 3–23 (FLDATFFAFVGLVLFLALVVY).

This sequence belongs to the ATPase B chain family. In terms of assembly, F-type ATPases have 2 components, F(1) - the catalytic core - and F(0) - the membrane proton channel. F(1) has five subunits: alpha(3), beta(3), gamma(1), delta(1), epsilon(1). F(0) has three main subunits: a(1), b(2) and c(10-14). The alpha and beta chains form an alternating ring which encloses part of the gamma chain. F(1) is attached to F(0) by a central stalk formed by the gamma and epsilon chains, while a peripheral stalk is formed by the delta and b chains.

It localises to the cell inner membrane. Functionally, f(1)F(0) ATP synthase produces ATP from ADP in the presence of a proton or sodium gradient. F-type ATPases consist of two structural domains, F(1) containing the extramembraneous catalytic core and F(0) containing the membrane proton channel, linked together by a central stalk and a peripheral stalk. During catalysis, ATP synthesis in the catalytic domain of F(1) is coupled via a rotary mechanism of the central stalk subunits to proton translocation. In terms of biological role, component of the F(0) channel, it forms part of the peripheral stalk, linking F(1) to F(0). This chain is ATP synthase subunit b 1, found in Rhizobium johnstonii (strain DSM 114642 / LMG 32736 / 3841) (Rhizobium leguminosarum bv. viciae).